The following is a 362-amino-acid chain: Homeobox protein Nkx-2.3 (362 aa).

2 disordered regions span residues 126 to 149 and 203 to 222; these read EAAG…RKPR and QRQD…PPRR. Over residues 132–141 the composition is skewed to basic and acidic residues; that stretch reads KTSEDGERPK. The segment at residues 145-204 is a DNA-binding region (homeobox); sequence RRKPRVLFSQAQVFELERRFKQQRYLSAPEREHLASSLKLTSTQVKIWFQNRRYKCKRQR.

The protein belongs to the NK-2 homeobox family. As to expression, expressed in spleen and intestine. Also expressed in salivary gland and tongue.

It localises to the nucleus. Its function is as follows. Transcriptional regulator essential for normal development and functions of the small intestine and spleen. Activates directly MADCAM1 expression. Required for homing of lymphocytes in spleen and mucosa-associated lymphoid tissue. May have a role during pharyngeal organogenesis. This Mus musculus (Mouse) protein is Homeobox protein Nkx-2.3 (Nkx2-3).